The following is a 466-amino-acid chain: Communesin N16 acyltransferase cnsK (466 aa).

It belongs to the fumigaclavine B O-acetyltransferase family.

Its pathway is alkaloid biosynthesis. Functionally, communesin N16 acyltransferase; part of the gene cluster that mediates the biosynthesis of communesins, a prominent class of indole alkaloids with great potential as pharmaceuticals. Communesins are biosynthesized by the coupling of tryptamine and aurantioclavine, two building blocks derived from L-tryptophan. The L-tryptophan decarboxylase cnsB converts L-tryptophan to tryptamine, whereas the tryptophan dimethylallyltransferase cnsF converts L-tryptophan to 4-dimethylallyl tryptophan which is further transformed to aurantioclavine by the aurantioclavine synthase cnsA, probably aided by the catalase cnsD. The cytochrome P450 monooxygenase cnsC catalyzes the heterodimeric coupling between the two different indole moieties, tryptamine and aurantioclavine, to construct vicinal quaternary stereocenters and yield the heptacyclic communesin scaffold. The O-methyltransferase cnsE then methylates the communesin scaffold to produce communesin K, the simplest characterized communesin that contains the heptacyclic core. The dioxygenase cnsJ converts communesin K into communesin I. Acylation to introduce the hexadienyl group at position N16 of communesin I by the acyltransferase cnsK leads to the production of communesin B. The hexadienyl group is produced by the highly reducing polyketide synthase cnsI, before being hydrolytically removed from cnsI by the serine hydrolase cnsH, converted into hexadienyl-CoA by the CoA ligase cnsG, and then transferred to communesin I by cnsK. Surprisingly, cnsK may also be a promiscuous acyltransferase that can tolerate a range of acyl groups, including acetyl-, propionyl-, and butyryl-CoA, which lead to communesins A, G and H respectively. The roles of the alpha-ketoglutarate-dependent dioxygenases cnsM and cnsP have still to be determined. The chain is Communesin N16 acyltransferase cnsK from Penicillium expansum (Blue mold rot fungus).